Reading from the N-terminus, the 250-residue chain is MAGVAFGSFDDSFSLASLRAYLAEFISTLLFVFAGVGSAIAYAKLTSDAALDTPGLVAIAVCHGFALFVAVAIGANISGGHVNPAVTFGLAVGGQITVITGVFYWIAQLLGSTAACFLLKYVTGGLAVPTHSVAAGLGSIEGVVMEIIITFALVYTVYATAADPKKGSLGTIAPLAIGLIVGANILAAGPFSGGSMNPARSFGPAVAAGDFSGHWVYWVGPLIGGGLAGLIYGNVFMGSSEHVPLASADF.

Met-1 carries the N-acetylmethionine modification. Topologically, residues 1–20 (MAGVAFGSFDDSFSLASLRA) are cytoplasmic. Ala-2 carries the N-acetylalanine; in Aquaporin TIP2-1, N-terminally processed modification. The chain crosses the membrane as a helical span at residues 21–41 (YLAEFISTLLFVFAGVGSAIA). Residues 42 to 54 (YAKLTSDAALDTP) lie on the Vacuolar side of the membrane. Residues 55-75 (GLVAIAVCHGFALFVAVAIGA) form a helical membrane-spanning segment. Residues 76–98 (NISGGHVNPAVTFGLAVGGQITV) are Cytoplasmic-facing. The NPA 1 motif lies at 83–85 (NPA). Residues 99-119 (ITGVFYWIAQLLGSTAACFLL) traverse the membrane as a helical segment. Residues 120 to 141 (KYVTGGLAVPTHSVAAGLGSIE) lie on the Vacuolar side of the membrane. The helical transmembrane segment at 142-162 (GVVMEIIITFALVYTVYATAA) threads the bilayer. Residues 163–168 (DPKKGS) lie on the Cytoplasmic side of the membrane. A helical transmembrane segment spans residues 169–189 (LGTIAPLAIGLIVGANILAAG). Topologically, residues 190–215 (PFSGGSMNPARSFGPAVAAGDFSGHW) are vacuolar. An NPA 2 motif is present at residues 197 to 199 (NPA). The chain crosses the membrane as a helical span at residues 216 to 236 (VYWVGPLIGGGLAGLIYGNVF). Topologically, residues 237–250 (MGSSEHVPLASADF) are cytoplasmic.

Belongs to the MIP/aquaporin (TC 1.A.8) family. TIP (TC 1.A.8.10) subfamily. As to quaternary structure, interacts with cucumber mosaic virus (CMV) Protein 1a. Strongly expressed in shoot, rosette, bolt and flowers. Also expressed in roots, flower buds and above ground.

The protein localises to the vacuole membrane. Aquaporin required to facilitate the transport of water from the vacuolar compartment to the cytoplasm. Does not promote glycerol permeability. Its function is impaired by Hg(2+). Transports urea in yeast cells and Xenopus laevis oocytes in a pH-independent manner. Transports methylammonium or ammonium in yeast cells and Xenopus laevis oocytes, preferentially at high medium pH. May participate in vacuolar compartmentation and detoxification of ammonium. The protein is Aquaporin TIP2-1 (TIP2-1) of Arabidopsis thaliana (Mouse-ear cress).